A 530-amino-acid chain; its full sequence is UDP-glucuronosyltransferase 1A8 (530 aa).

Positions 1 to 25 (MAPSGCPPSLPLCVCLFLASGFAQA) are cleaved as a signal peptide. Residues asparagine 71, asparagine 292, and asparagine 430 are each glycosylated (N-linked (GlcNAc...) asparagine). Residues 488–504 (VIGFLLAIVLTVVFIVY) form a helical membrane-spanning segment.

It belongs to the UDP-glycosyltransferase family. Homodimers. Homooligomer. Interacts with UGT1A1, UGT1A3, UGT1A4, UGT1A6, UGT1A7, UGT1A8, UGT1A9 and UGT1A10 to form heterodimers.

It localises to the endoplasmic reticulum membrane. The catalysed reaction is glucuronate acceptor + UDP-alpha-D-glucuronate = acceptor beta-D-glucuronoside + UDP + H(+). The enzyme catalyses 17beta-estradiol + UDP-alpha-D-glucuronate = 17beta-estradiol 3-O-(beta-D-glucuronate) + UDP + H(+). It carries out the reaction 17alpha-estradiol + UDP-alpha-D-glucuronate = 17alpha-estradiol 3-O-(beta-D-glucuronate) + UDP + H(+). It catalyses the reaction estrone + UDP-alpha-D-glucuronate = estrone 3-O-(beta-D-glucuronate) + UDP + H(+). The catalysed reaction is 16alpha,17alpha-estriol + UDP-alpha-D-glucuronate = 16alpha,17alpha-estriol 3-O-(beta-D-glucuronate) + UDP + H(+). The enzyme catalyses 2-hydroxy-17beta-estradiol + UDP-alpha-D-glucuronate = 2-hydroxy-17beta-estradiol 3-O-(beta-D-glucuronate) + UDP + H(+). It carries out the reaction 2-hydroxy-17beta-estradiol + UDP-alpha-D-glucuronate = 17beta-estradiol 2-O-(beta-D-glucuronate) + UDP + H(+). It catalyses the reaction 2-hydroxyestrone + UDP-alpha-D-glucuronate = 2-hydroxyestrone 3-O-(beta-D-glucuronate) + UDP + H(+). The catalysed reaction is 4-hydroxy-17beta-estradiol + UDP-alpha-D-glucuronate = 4-hydroxy-17beta-estradiol 3-O-(beta-D-glucuronate) + UDP + H(+). The enzyme catalyses 4-hydroxy-17beta-estradiol + UDP-alpha-D-glucuronate = 17beta-estradiol 4-O-(beta-D-glucuronate) + UDP + H(+). It carries out the reaction 4-hydroxyestrone + UDP-alpha-D-glucuronate = 4-hydroxyestrone 3-O-(beta-D-glucuronate) + UDP + H(+). It catalyses the reaction 4-hydroxyestrone + UDP-alpha-D-glucuronate = estrone 4-O-(beta-D-glucuronate) + UDP + H(+). The catalysed reaction is 2-methoxy-17beta-estradiol + UDP-alpha-D-glucuronate = 2-methoxy-17beta-estradiol 3-O-(beta-D-glucuronate) + UDP + H(+). The enzyme catalyses 2-methoxyestrone + UDP-alpha-D-glucuronate = 2-methoxyestrone 3-O-(beta-D-glucuronate) + UDP + H(+). It carries out the reaction 4-methoxy-17beta-estradiol + UDP-alpha-D-glucuronate = 4-methoxy-17beta-estradiol 3-O-(beta-D-glucuronate) + UDP + H(+). It catalyses the reaction 4-methoxyestrone + UDP-alpha-D-glucuronate = 4-methoxyestrone 3-O-(beta-D-glucuronate) + UDP + H(+). The catalysed reaction is 17beta-hydroxy-5alpha-androstan-3-one + UDP-alpha-D-glucuronate = 5alpha-dihydrotestosterone 17-O-(beta-D-glucuronate) + UDP + H(+). The enzyme catalyses 5alpha-dihydrotestosterone 17-O-(beta-D-glucuronate) + UDP-alpha-D-glucuronate = 5alpha-dihydrotestosterone 17-O-[beta-D-glucuronosyl-(1-&gt;2)-glucuronate] + UDP + H(+). It carries out the reaction prunetin + UDP-alpha-D-glucuronate = prunetin-4'-O-beta-D-glucuronide + UDP. It catalyses the reaction prunetin + UDP-alpha-D-glucuronate = prunetin-5-O-beta-D-glucuronide + UDP. The catalysed reaction is (E)-ferulate + UDP-alpha-D-glucuronate = (E)-4-O-(beta-D-glucuronosyl)-ferulate + UDP + H(+). The enzyme catalyses (E)-ferulate + UDP-alpha-D-glucuronate = (E)-ferulic acid beta-D-glucuronate ester + UDP. It carries out the reaction candesartan + UDP-alpha-D-glucuronate = candesartan O-beta-D-glucuronoside + UDP. It catalyses the reaction mycophenolate + UDP-alpha-D-glucuronate = mycophenolate 7-O-beta-D-glucuronide + UDP + H(+). Functionally, UDP-glucuronosyltransferase (UGT) that catalyzes phase II biotransformation reactions in which lipophilic substrates are conjugated with glucuronic acid to increase the metabolite's water solubility, thereby facilitating excretion into either the urine or bile. Essential for the elimination and detoxification of drugs, xenobiotics and endogenous compounds. Catalyzes the glucuronidation of endogenous steroid hormones such as androgens and estrogens. Produces dihydrotestosterone (DHT) diglucuronide from the DHT after two subsequent glucoronidation steps. Involved in the glucuronidation of the phytochemical ferulic acid at the phenolic or the carboxylic acid group. Also catalyzes the glucuronidation of the isoflavones genistein, daidzein, glycitein, formononetin, biochanin A and prunetin, which are phytoestrogens with anticancer and cardiovascular properties. Involved in the glucuronidation of the AGTR1 angiotensin receptor antagonist caderastan, a drug which can inhibit the effect of angiotensin II. Also metabolizes mycophenolate, an immunosuppressive agent. This chain is UDP-glucuronosyltransferase 1A8, found in Rattus norvegicus (Rat).